The chain runs to 315 residues: Transposase for insertion sequence element IS640 (315 aa).

One can recognise an HTH IS21-type domain in the interval 5 to 66; the sequence is EDFYMIKQMR…PFMDYIDMRL (62 aa). Positions 111–285 constitute an Integrase catalytic domain; the sequence is FETQPGYQLQ…TPEQRSRWSR (175 aa).

It belongs to the transposase IS21/IS408/IS1162 family.

Functionally, involved in the transposition of the insertion sequence. This Shigella sonnei protein is Transposase for insertion sequence element IS640 (istA).